A 2185-amino-acid chain; its full sequence is MGAQVSTQKTGAHETSLSAAGNSVIHYTNINYYKDAASNSANRQDFTQDPGKFTEPVKDIMVKSMPALNSPSAEECGYSDRVRSITLGNSTITTQECANVVVGYGVWPTYLKDEEATAEDQPTQPDVATCRFYTLESVMWQQSSPGWWWKFPDALSNMGLFGQNMQYHYLGRAGYTIHVQCNASKFHQGCLLVVCVPEAEMGCATLANKPDPKSLSKGEIANMFESQNSTGETAVQANVINAGMGVGVGNLTIFPHQWINLRTNNSATIVMPYINSVPMDNMFRHNNFTLMVIPFAPLSYSTGATTYVPITVTVAPMCAEYNGLRLAGKQGLPTLSTPGSNQFLTSDDFQSPSAMPQFDVTPEMDIPGQVNNLMEIAEVDSVVPVNNTEGKVMSIEAYQIPVQSNPTNGSQVFGFPLTPGANSVLNRTLLGEILNYYAHWSGSIKLTFMFCGSAMATGKFLLAYSPPGAGAPTTRKEAMLGTHVIWDVGLQSSCVLCIPWISQTHYRYVVMDEYTAGGYITCWYQTNIVVPADAQSDCKILCFVSACNDFSVRMLKDTPFIKQDNFFQGPPGEVMGRAIARVADTIGSGPVNSESIPALTAAETGHTSQVVPSDTMQTRHVKNYHSRSESTVENFLCRSACVFYTTYKNHDSDGDNFAYWVINTRQVAQLRRKLEMFTYARFDLELTFVITSTQEQPTVRGQDAPVLTHQIMYVPPGGPVPTKVNSYSWQTSTNPSVFWTEGSAPPRMSIPFIGIGNAYSMFYDGWARFDKQGTYGISTLNNMGTLYMRHVNDGGPGPIVSTVRIYFKPKHVKTWVPRPPRLCQYQKAGNVNFEPTGVTEGRTDITTMKTTGAFGQQSGAVYVGNYRVVNRHLATRADWQNCVWEDYNRDLLVSTTTAHGCDTIARCDCTAGVYFCASRNKHYPVTFEGPGLVEVQESEYYPKKYQSHVLLAAGFAEPGDCGGILRCQHGVIGIVTVGGEGVVGFADVRDLLWLEDDAMEQGVRDYVEQLGNCFGSGFTNQICEQVTLLKESLIGQDSILEKSLKALVKIVSALVIVVRNHDDLITVTATLALIGCTTSPWRWLKQKVSQYYGIPMAERQNSGWLKKFTEMTNACKGMEWIAIKIQKFIEWLKVKILPEVKEKHEFLNRLKQLPLLESQIATIEQSAPSQSDQEQLFSNVQYFAHYCRKYAPLYAAEAKRVFSLEKKMSNYIQFKSKCRIEPVCLLLHGSPGAGKSVATNLIGRSLAEKLNSSVYSLPPDPDHFDGYKQQAVVIMDDLCQNPDGKDVSLFCQMVSSVDFVPPMAALEEKGILFTSPFVLASTNAGSVNAPTVSDSRALVRRFHFDMNIEVVSMYSQNGKINMPMAVKTCDEECCPVNFKKCCPLVCGKAIQFIDRRTQVRYSLDMLVTEMFREYNHRHSVGATLEALFQGPPVYREIKISVAPETPPPPAVADLLKSVDSEAVREYCKEKGWLIPEVDSTLQIEKHVNRAFICLQALTTFVSVAGIIYIIYKLFAGFQGAYTGMPNQKPRVPTLRQAKVQGPAFEFAVAMMKRNASTVKTEYGEFTMLGIYDRWAVLPRHAKPGPTILMNDQVVGVLDAKELVDKDGTNLELTLLKLNRNEKFRDIRGFLAREEVEVNEAVLAINTSKFPNMYIPVGRVTDYGFLNLGGTPTKRMLMYNFPTRAGQCGGVLMSTGKVLGIHVGGNGHQGFSAALLRHYFNEEQGEIEFIESSKDAGFPVINTPSKTKLEPSVFHHVFEGNKEPAVLRNGDPRLKANFEEAIFSKYIGNVNTHVDEYMMEAVDHYAGQLATLDISTEPMKLEDAVYGTEGLEALDLTTSAGYPYVALGIKKRDILSKKTRDLTKLKECMDKYGLNLPMVTYVKDELRSADKVAKGKSRLIEASSLNDSVAMRQTFGNLYKTFHLNPGIVTGSAVGCDPDVFWSKIPVMLDGHLIAFDYSGYDASLSPVWFTCLKLLLEKLGYTNKETNYIDYLCNSHHLYRDKHYFVRGGMPSGCSGTSIFNSMINNIIIRTLMLKVYKGIDLDQFRMIAYGDDVIASYPWPIDASLLAEAGKDYGLIMTPADKGECFNEVTWTNVTFLKRYFRADEQYPFLVHPVMPMKDIHESIRWTKDPKNTQDHVRSLCLLAWHNGEHEYEEFIRKIRSVRVGRCLSLPAFSTLRRKWLDSF.

Glycine 2 carries the N-myristoyl glycine; by host lipid modification. Residues 2–1495 (GAQVSTQKTG…HVNRAFICLQ (1494 aa)) lie on the Cytoplasmic side of the membrane. Positions 566–582 (FFQGPPGEVMGRAIARV) are amphipathic alpha-helix. Active-site for protease 2A activity residues include histidine 872 and aspartate 890. 2 residues coordinate Zn(2+): cysteine 907 and cysteine 909. The active-site For protease 2A activity is cysteine 961. Residues cysteine 967 and histidine 969 each contribute to the Zn(2+) site. Positions 1101-1173 (NSGWLKKFTE…EQSAPSQSDQ (73 aa)) are membrane-binding. The segment at 1101-1239 (NSGWLKKFTE…SPGAGKSVAT (139 aa)) is oligomerization. The RNA-binding stretch occupies residues 1122–1126 (AIKIQ). An SF3 helicase domain is found at 1205–1361 (EKKMSNYIQF…SMYSQNGKIN (157 aa)). Zn(2+) contacts are provided by cysteine 1369, cysteine 1381, and cysteine 1386. A C4-type; degenerate zinc finger spans residues 1369 to 1386 (CDEECCPVNFKKCCPLVC). An RNA-binding region spans residues 1413–1420 (EYNHRHSV). An oligomerization region spans residues 1424 to 1429 (LEALFQ). The stretch at 1496 to 1511 (ALTTFVSVAGIIYIIY) is an intramembrane region. The Cytoplasmic portion of the chain corresponds to 1512–2185 (KLFAGFQGAY…TLRRKWLDSF (674 aa)). Tyrosine 1521 carries the O-(5'-phospho-RNA)-tyrosine modification. The Peptidase C3 domain occupies 1541 to 1719 (GPAFEFAVAM…FSAALLRHYF (179 aa)). Residues histidine 1580, glutamate 1611, and cysteine 1687 each act as for protease 3C activity in the active site. In terms of domain architecture, RdRp catalytic spans 1950 to 2066 (GHLIAFDYSG…SYPWPIDASL (117 aa)). 2 residues coordinate Mg(2+): aspartate 1956 and aspartate 2052.

It belongs to the picornaviruses polyprotein family. Interacts with capsid protein VP1 and capsid protein VP3 to form heterotrimeric protomers. In terms of assembly, interacts with capsid protein VP0, and capsid protein VP3 to form heterotrimeric protomers. Five protomers subsequently associate to form pentamers which serve as building blocks for the capsid. Interacts with capsid protein VP2, capsid protein VP3 and capsid protein VP4 following cleavage of capsid protein VP0. Interacts with host CXADR. As to quaternary structure, interacts with capsid protein VP1 and capsid protein VP3 in the mature capsid. Interacts with capsid protein VP0 and capsid protein VP1 to form heterotrimeric protomers. Five protomers subsequently associate to form pentamers which serve as building blocks for the capsid. Interacts with capsid protein VP4 in the mature capsid. Interacts with protein 2C; this interaction may be important for virion morphogenesis. In terms of assembly, interacts with capsid protein VP1 and capsid protein VP3. As to quaternary structure, homodimer. Homohexamer; forms a hexameric ring structure with 6-fold symmetry characteristic of AAA+ ATPases. Interacts (via N-terminus) with host RTN3 (via reticulon domain); this interaction is important for viral replication. Interacts with capsid protein VP3; this interaction may be important for virion morphogenesis. In terms of assembly, interacts with protein 3CD. As to quaternary structure, homodimer. Interacts with host GBF1. Interacts (via GOLD domain) with host ACBD3 (via GOLD domain); this interaction allows the formation of a viral protein 3A/ACBD3 heterotetramer with a 2:2 stoichiometry, which will stimulate the recruitment of host PI4KB in order to synthesize PI4P at the viral RNA replication sites. Interacts with RNA-directed RNA polymerase. In terms of assembly, interacts with protein 3AB and with RNA-directed RNA polymerase. As to quaternary structure, interacts with Viral protein genome-linked and with protein 3CD. It depends on Mg(2+) as a cofactor. In terms of processing, specific enzymatic cleavages in vivo by the viral proteases yield processing intermediates and the mature proteins. Post-translationally, myristoylation is required for the formation of pentamers during virus assembly. Further assembly of 12 pentamers and a molecule of genomic RNA generates the provirion. During virion maturation, immature virions are rendered infectious following cleavage of VP0 into VP4 and VP2. This maturation seems to be an autocatalytic event triggered by the presence of RNA in the capsid and it is followed by a conformational change infectious virion. In terms of processing, myristoylation is required during RNA encapsidation and formation of the mature virus particle. Post-translationally, VPg is uridylylated by the polymerase into VPg-pUpU. This acts as a nucleotide-peptide primer for the genomic RNA replication.

It localises to the virion. It is found in the host cytoplasm. The protein localises to the host cytoplasmic vesicle membrane. The protein resides in the host nucleus. The catalysed reaction is a ribonucleoside 5'-triphosphate + H2O = a ribonucleoside 5'-diphosphate + phosphate + H(+). It carries out the reaction Selective cleavage of Tyr-|-Gly bond in the picornavirus polyprotein.. It catalyses the reaction RNA(n) + a ribonucleoside 5'-triphosphate = RNA(n+1) + diphosphate. The enzyme catalyses Selective cleavage of Gln-|-Gly bond in the poliovirus polyprotein. In other picornavirus reactions Glu may be substituted for Gln, and Ser or Thr for Gly.. Its activity is regulated as follows. Replication or transcription is subject to high level of random mutations by the nucleotide analog ribavirin. Its function is as follows. Forms an icosahedral capsid of pseudo T=3 symmetry with capsid proteins VP2 and VP3. The capsid is 300 Angstroms in diameter, composed of 60 copies of each capsid protein and enclosing the viral positive strand RNA genome. Capsid protein VP1 mainly forms the vertices of the capsid. Capsid protein VP1 interacts with host CXADR to provide virion attachment to target host cells. This attachment induces virion internalization. Tyrosine kinases are probably involved in the entry process. After binding to its receptor, the capsid undergoes conformational changes. Capsid protein VP1 N-terminus (that contains an amphipathic alpha-helix) and capsid protein VP4 are externalized. Together, they shape a pore in the host membrane through which viral genome is translocated to host cell cytoplasm. In terms of biological role, forms an icosahedral capsid of pseudo T=3 symmetry with capsid proteins VP2 and VP3. The capsid is 300 Angstroms in diameter, composed of 60 copies of each capsid protein and enclosing the viral positive strand RNA genome. Lies on the inner surface of the capsid shell. After binding to the host receptor, the capsid undergoes conformational changes. Capsid protein VP4 is released, Capsid protein VP1 N-terminus is externalized, and together, they shape a pore in the host membrane through which the viral genome is translocated into the host cell cytoplasm. Functionally, component of immature procapsids, which is cleaved into capsid proteins VP4 and VP2 after maturation. Allows the capsid to remain inactive before the maturation step. Its function is as follows. Cysteine protease that cleaves viral polyprotein and specific host proteins. It is responsible for the autocatalytic cleavage between the P1 and P2 regions, which is the first cleavage occurring in the polyprotein. Also cleaves the host translation initiation factor EIF4G1, in order to shut down the capped cellular mRNA translation. Inhibits the host nucleus-cytoplasm protein and RNA trafficking by cleaving host members of the nuclear pores. Counteracts stress granule formation probably by antagonizing its assembly or promoting its dissassembly. In terms of biological role, plays an essential role in the virus replication cycle by acting as a viroporin. Creates a pore in the host endoplasmic reticulum and as a consequence releases Ca2+ in the cytoplasm of infected cell. In turn, high levels of cytoplasmic calcium may trigger membrane trafficking and transport of viral ER-associated proteins to viroplasms, sites of viral genome replication. Induces and associates with structural rearrangements of intracellular membranes. Displays RNA-binding, nucleotide binding and NTPase activities. May play a role in virion morphogenesis and viral RNA encapsidation by interacting with the capsid protein VP3. Functionally, localizes the viral replication complex to the surface of membranous vesicles. Together with protein 3CD binds the Cis-Active RNA Element (CRE) which is involved in RNA synthesis initiation. Acts as a cofactor to stimulate the activity of 3D polymerase, maybe through a nucleid acid chaperone activity. Its function is as follows. Localizes the viral replication complex to the surface of membranous vesicles. It inhibits host cell endoplasmic reticulum-to-Golgi apparatus transport and causes the disassembly of the Golgi complex, possibly through GBF1 interaction. This would result in depletion of MHC, trail receptors and IFN receptors at the host cell surface. Plays an essential role in viral RNA replication by recruiting ACBD3 and PI4KB at the viral replication sites, thereby allowing the formation of the rearranged membranous structures where viral replication takes place. In terms of biological role, acts as a primer for viral RNA replication and remains covalently bound to viral genomic RNA. VPg is uridylylated prior to priming replication into VPg-pUpU. The oriI viral genomic sequence may act as a template for this. The VPg-pUpU is then used as primer on the genomic RNA poly(A) by the RNA-dependent RNA polymerase to replicate the viral genome. During genome replication, the VPg-RNA linkage is removed by the host TDP2, thereby accelerating replication. During the late stage of the replication cycle, host TDP2 is excluded from sites of viral RNA synthesis and encapsidation, allowing for the generation of progeny virions. Involved in the viral replication complex and viral polypeptide maturation. It exhibits protease activity with a specificity and catalytic efficiency that is different from protease 3C. Protein 3CD lacks polymerase activity. Protein 3CD binds to the 5'UTR of the viral genome. Functionally, replicates the viral genomic RNA on the surface of intracellular membranes. May form linear arrays of subunits that propagate along a strong head-to-tail interaction called interface-I. Covalently attaches UMP to a tyrosine of VPg, which is used to prime RNA synthesis. The positive stranded RNA genome is first replicated at virus induced membranous vesicles, creating a dsRNA genomic replication form. This dsRNA is then used as template to synthesize positive stranded RNA genomes. ss(+)RNA genomes are either translated, replicated or encapsidated. Its function is as follows. Major viral protease that mediates proteolytic processing of the polyprotein. Cleaves host EIF5B, contributing to host translation shutoff. Also cleaves host PABPC1, contributing to host translation shutoff. Cleaves host NLRP1, triggers host N-glycine-mediated degradation of the autoinhibitory NLRP1 N-terminal fragment. This chain is Genome polyprotein, found in Sus scrofa (Pig).